The chain runs to 450 residues: Tubulin alpha-3 chain (450 aa).

Gln11, Glu71, Gly144, Thr145, Thr179, Asn206, and Asn228 together coordinate GTP. Glu71 serves as a coordination point for Mg(2+). The active site involves Glu254.

It belongs to the tubulin family. In terms of assembly, dimer of alpha and beta chains. A typical microtubule is a hollow water-filled tube with an outer diameter of 25 nm and an inner diameter of 15 nM. Alpha-beta heterodimers associate head-to-tail to form protofilaments running lengthwise along the microtubule wall with the beta-tubulin subunit facing the microtubule plus end conferring a structural polarity. Microtubules usually have 13 protofilaments but different protofilament numbers can be found in some organisms and specialized cells. Mg(2+) is required as a cofactor. In terms of processing, undergoes a tyrosination/detyrosination cycle, the cyclic removal and re-addition of a C-terminal tyrosine residue by the enzymes tubulin tyrosine carboxypeptidase (TTCP) and tubulin tyrosine ligase (TTL), respectively.

The protein localises to the cytoplasm. The protein resides in the cytoskeleton. The catalysed reaction is GTP + H2O = GDP + phosphate + H(+). In terms of biological role, tubulin is the major constituent of microtubules, a cylinder consisting of laterally associated linear protofilaments composed of alpha- and beta-tubulin heterodimers. Microtubules grow by the addition of GTP-tubulin dimers to the microtubule end, where a stabilizing cap forms. Below the cap, tubulin dimers are in GDP-bound state, owing to GTPase activity of alpha-tubulin. This chain is Tubulin alpha-3 chain (TUBA3), found in Eleusine indica (Goosegrass).